The sequence spans 1043 residues: MTADEVGKNSFAKKEEQVLKFWKDNQIFEKSLQNRQGKTLYSFYDGPPFATGLPHYGHLLASTIKDVVGRYATMDGYYVPRRFGWDCHGVPVEYEVEKSLSLTAPGAIEDFGIASFNEECRKIVFRYVHEWEYYINRIGRWVDFSSTWKTMDASFMESVWWVFQSLYNQGLVYEGTKVVPFSTALGTPLSNFEASQNYKEVDDPSLVVRMPLQNDSASLLVWTTTPWTLPSNMAIAVGETLVYVRIQDKKSGEQWILSQGCVSRWFSNPEEFVILESFSGKDLVGRTYEPPFTFFQSKREEGAFRVIAASFVEESEGTGVVHMAPAFGEGDFLVCKENHVPLVCPVDAHGSFTEEIPQYQGQYIKHADKEIIKFLKKEGRIFYHGTVKHRYPFCWRTDTPLIYKAVNSWFVAVEKIKDKMLRANSSIHWVPEHIQEGRFGKWLEGARDWAISRNRYWGTPIPIWKSADGEILVVGSIRELEELTGTQITDIHRHFIDDLNIVKDGKPFHRIPYVFDCWFDSGAMPYAQNHYPFENQKETEEAFPADFIAEGLDQTRGWFYTLTVISAILFDRPAFRNAIVNGIILAEDGNKMSKRLNNYPSPKYVLDTYGADALRLYLLHSVVVKAEDLRFSDKGIEGVLKQILLPLTNVLSFFNTYAELYGFDPKSQDIEPAYTEIDQWILSNLYSVVGKVRESMSQYHLNFAVEPFVTFIDDLTNWYIRRCRRRFWEAEDTPDRRAAFSTLYEVLTVFCKVIAPFVPFLAEDIYQKLKLEKEPESVHLCDFPQVEMDKILPDLEKRMHDIREIVGLGHSLRKEHKLKVRQPLANFYVVGSKDRLSLLKTFEGLIAEELNVKNVIFYEEAPSFIYTTVKPNFRMLGKKVGSKMKEVQKALSELPNNAIDKLIQEETWVLTIDDREIALDGDDVVICRHTDPGYIARSSALFSVILDCQLREPLIVEGIARELVNKINTMRRNQQLHVSDRIALRIKTTEAVHRAFLDYENYICEETLIIAYDFTQDSDFQGENWDINGHATQIEITVSSIDS.

The 'HIGH' region motif lies at P48–H58. Residues K591 to R595 carry the 'KMSKS' region motif. ATP is bound at residue K594.

This sequence belongs to the class-I aminoacyl-tRNA synthetase family. IleS type 2 subfamily. Monomer. Zn(2+) serves as cofactor.

It localises to the cytoplasm. It catalyses the reaction tRNA(Ile) + L-isoleucine + ATP = L-isoleucyl-tRNA(Ile) + AMP + diphosphate. Catalyzes the attachment of isoleucine to tRNA(Ile). As IleRS can inadvertently accommodate and process structurally similar amino acids such as valine, to avoid such errors it has two additional distinct tRNA(Ile)-dependent editing activities. One activity is designated as 'pretransfer' editing and involves the hydrolysis of activated Val-AMP. The other activity is designated 'posttransfer' editing and involves deacylation of mischarged Val-tRNA(Ile). This is Isoleucine--tRNA ligase from Chlamydia pneumoniae (Chlamydophila pneumoniae).